A 214-amino-acid polypeptide reads, in one-letter code: Putative AgrB-like protein 2 (214 aa).

Transmembrane regions (helical) follow at residues 41 to 61 (IISV…LIFL), 83 to 103 (TLLG…SFFA), 109 to 129 (LVVF…FKFA), 154 to 174 (ILTI…NSGW), and 179 to 199 (PVML…TYIG).

This sequence belongs to the AgrB family.

It is found in the cell membrane. May be involved in the proteolytic processing of a quorum sensing system signal molecule precursor. The sequence is that of Putative AgrB-like protein 2 from Clostridium perfringens (strain 13 / Type A).